We begin with the raw amino-acid sequence, 125 residues long: MPTIQQLIRTERQHLTRKTKSPALRACPERRGVCTRVYTSTPKKPNSALRKVARVRLTSGFEVTAYIPGIGHNLQEHSVVLIRGGRVKDLPGVRYHIIRGTLDTAGVKDRSQSRSKYGAKASKQD.

Residue aspartate 89 is modified to 3-methylthioaspartic acid. The interval 104-125 (TAGVKDRSQSRSKYGAKASKQD) is disordered.

The protein belongs to the universal ribosomal protein uS12 family. As to quaternary structure, part of the 30S ribosomal subunit. Contacts proteins S8 and S17. May interact with IF1 in the 30S initiation complex.

With S4 and S5 plays an important role in translational accuracy. Its function is as follows. Interacts with and stabilizes bases of the 16S rRNA that are involved in tRNA selection in the A site and with the mRNA backbone. Located at the interface of the 30S and 50S subunits, it traverses the body of the 30S subunit contacting proteins on the other side and probably holding the rRNA structure together. The combined cluster of proteins S8, S12 and S17 appears to hold together the shoulder and platform of the 30S subunit. In Prochlorococcus marinus (strain MIT 9303), this protein is Small ribosomal subunit protein uS12.